We begin with the raw amino-acid sequence, 77 residues long: Acyl carrier protein (77 aa).

One can recognise a Carrier domain in the interval 2-77; it reads SDVADRVKKI…DAVKFISEAS (76 aa). Serine 37 bears the O-(pantetheine 4'-phosphoryl)serine mark.

Belongs to the acyl carrier protein (ACP) family. Post-translationally, 4'-phosphopantetheine is transferred from CoA to a specific serine of apo-ACP by AcpS. This modification is essential for activity because fatty acids are bound in thioester linkage to the sulfhydryl of the prosthetic group.

It localises to the cytoplasm. The protein operates within lipid metabolism; fatty acid biosynthesis. Carrier of the growing fatty acid chain in fatty acid biosynthesis. The sequence is that of Acyl carrier protein from Ruegeria pomeroyi (strain ATCC 700808 / DSM 15171 / DSS-3) (Silicibacter pomeroyi).